We begin with the raw amino-acid sequence, 206 residues long: Large ribosomal subunit protein uL3 (206 aa).

Residues 116–149 are disordered; sequence GFQGAIKRHNQSRGPMSHGSRYHRRPGSMGPVAP.

This sequence belongs to the universal ribosomal protein uL3 family. As to quaternary structure, part of the 50S ribosomal subunit. Forms a cluster with proteins L14 and L19.

Functionally, one of the primary rRNA binding proteins, it binds directly near the 3'-end of the 23S rRNA, where it nucleates assembly of the 50S subunit. This Shouchella clausii (strain KSM-K16) (Alkalihalobacillus clausii) protein is Large ribosomal subunit protein uL3.